The chain runs to 250 residues: 2-(R)-hydroxypropyl-CoM dehydrogenase (250 aa).

NAD(+)-binding positions include 12-14, Asp-33, 60-61, and Asn-87; these read SGN and DV. Arg-152 is a 2-oxopropyl-coenzyme M binding site. Residue Tyr-155 is the Proton acceptor of the active site. 188–192 is a binding site for NAD(+); that stretch reads IETPM. 195-196 lines the 2-oxopropyl-coenzyme M pocket; that stretch reads WR.

Belongs to the short-chain dehydrogenases/reductases (SDR) family. As to quaternary structure, homodimer in solution. Homotetramer. Component III of the aliphatic epoxide carboxylation complex together with components I, II and IV.

It carries out the reaction (R)-2-hydroxypropyl-coenzyme M + NAD(+) = 2-oxopropyl-coenzyme M + NADH + H(+). The protein operates within alkene metabolism; propylene degradation. With respect to regulation, inhibited by the arginine-specific modifiers 2,3-butanedione and phenylglyoxal. 2-(2-methyl-2-hydroxypropylthio)ethanesulfonate (M-HPC), an achiral analog of both R-HPC and S-HPC, and (2S)-2-hydroxypropyl-coenzyme M (S-HPC) are competitive inhibitors. Inhibited (at 70%) by the coenzyme M analog 2-bromoethanesulfonate (BES). In terms of biological role, involved in aliphatic epoxide carboxylation. Catalyzes the reversible oxidation of (R)-2-hydroxypropyl-coenzyme M (R-HPC) to 2-oxopropyl-coenzyme M (2-KPC). The enzyme is highly specific for the R enantiomers. In vitro can also use achiral 2-propanol and short-chain (R)- and (S)-2-alkanols. This Xanthobacter autotrophicus (strain ATCC BAA-1158 / Py2) protein is 2-(R)-hydroxypropyl-CoM dehydrogenase.